The primary structure comprises 838 residues: Tuftelin-interacting protein 11 (838 aa).

Basic and acidic residues predominate over residues 1–13 (MSLSHLYRDGEGH). The tract at residues 1–51 (MSLSHLYRDGEGHLDDDDDDERENFEITDWDLQNEFNPNRQRHWQTKEEAT) is required for interaction with DHX15. 2 disordered regions span residues 1-74 (MSLS…RARD) and 86-137 (LKKG…SGGT). At serine 2 the chain carries Phosphoserine. Residues 14 to 29 (LDDDDDDERENFEITD) show a composition bias toward acidic residues. The segment covering 45-65 (QTKEEATYGVWAERDSDEERP) has biased composition (basic and acidic residues). 3 positions are modified to phosphoserine: serine 60, serine 96, and serine 99. The segment covering 92–101 (EEADSEDSDA) has biased composition (acidic residues). Residues 102-117 (EEKPVKQEDFPKDLGP) are compositionally biased toward basic and acidic residues. A Phosphoserine modification is found at serine 145. Positions 150–196 (TKGIGQKLLQKMGYVPGRGLGKNAQGIINPIEAKQRKGKGAVGAYGS) constitute a G-patch domain. Residues 193–237 (AYGSERTTQSLQDFPVADSEEEAEEEFQKELSQWRKDPSGSKKKP) form a disordered region. Residue serine 211 is modified to Phosphoserine. A compositionally biased stretch (basic and acidic residues) spans 218-232 (EFQKELSQWRKDPSG). The Nuclear localization signal motif lies at 701-706 (VKDKFN). The tract at residues 711–735 (IMNRAVSSNVGAYMQPGARENIAYL) is required for nuclear speckle localization.

It belongs to the TFP11/STIP family. In terms of assembly, identified in the spliceosome C complex. Found in the Intron Large (IL) complex, a post-mRNA release spliceosomal complex containing the excised intron, U2, U5 and U6 snRNPs, and splicing factors. Interacts with TUFT1. Interacts with DHX15; indicative for a recruitment of DHX15 to the IL complex. Interacts with GCFC2. In terms of tissue distribution, widely expressed. In tooth it is expressed in ameloblasts and odontoblasts.

It localises to the cytoplasm. It is found in the nucleus. In terms of biological role, involved in pre-mRNA splicing, specifically in spliceosome disassembly during late-stage splicing events. Intron turnover seems to proceed through reactions in two lariat-intron associated complexes termed Intron Large (IL) and Intron Small (IS). In cooperation with DHX15 seems to mediate the transition of the U2, U5 and U6 snRNP-containing IL complex to the snRNP-free IS complex leading to efficient debranching and turnover of excised introns. May play a role in the differentiation of ameloblasts and odontoblasts or in the forming of the enamel extracellular matrix. The sequence is that of Tuftelin-interacting protein 11 (Tfip11) from Mus musculus (Mouse).